A 318-amino-acid chain; its full sequence is Putative HTH-type transcriptional regulatory protein MJ1164 (318 aa).

An HTH cro/C1-type domain is found at Leu131 to Phe189. Positions Val142–Thr161 form a DNA-binding region, H-T-H motif.

This is Putative HTH-type transcriptional regulatory protein MJ1164 from Methanocaldococcus jannaschii (strain ATCC 43067 / DSM 2661 / JAL-1 / JCM 10045 / NBRC 100440) (Methanococcus jannaschii).